We begin with the raw amino-acid sequence, 186 residues long: Inosine/xanthosine triphosphatase (186 aa).

Position 75 (Gln-75) interacts with Mg(2+).

Belongs to the YjjX NTPase family. As to quaternary structure, homodimer. Mg(2+) serves as cofactor. Mn(2+) is required as a cofactor.

It catalyses the reaction XTP + H2O = XDP + phosphate + H(+). The enzyme catalyses ITP + H2O = IDP + phosphate + H(+). Phosphatase that hydrolyzes non-canonical purine nucleotides such as XTP and ITP to their respective diphosphate derivatives. Probably excludes non-canonical purines from DNA/RNA precursor pool, thus preventing their incorporation into DNA/RNA and avoiding chromosomal lesions. The polypeptide is Inosine/xanthosine triphosphatase (Shewanella baltica (strain OS195)).